Reading from the N-terminus, the 602-residue chain is Threonine--tRNA ligase (602 aa).

The segment at Asp208 to Pro499 is catalytic. Zn(2+) is bound by residues Cys300, His351, and His476.

The protein belongs to the class-II aminoacyl-tRNA synthetase family. As to quaternary structure, homodimer. Zn(2+) is required as a cofactor.

The protein resides in the cytoplasm. It carries out the reaction tRNA(Thr) + L-threonine + ATP = L-threonyl-tRNA(Thr) + AMP + diphosphate + H(+). Functionally, catalyzes the attachment of threonine to tRNA(Thr) in a two-step reaction: L-threonine is first activated by ATP to form Thr-AMP and then transferred to the acceptor end of tRNA(Thr). Also edits incorrectly charged L-seryl-tRNA(Thr). The polypeptide is Threonine--tRNA ligase (Campylobacter jejuni subsp. jejuni serotype O:2 (strain ATCC 700819 / NCTC 11168)).